The primary structure comprises 578 residues: Phosphoenolpyruvate-protein phosphotransferase (578 aa).

Residue His-195 is the Tele-phosphohistidine intermediate of the active site. 2 residues coordinate phosphoenolpyruvate: Arg-302 and Arg-338. The Mg(2+) site is built by Glu-437 and Asp-461. Residues 460 to 461 and Arg-471 contribute to the phosphoenolpyruvate site; that span reads ND. Cys-508 (proton donor) is an active-site residue.

It belongs to the PEP-utilizing enzyme family. In terms of assembly, homodimer. Mg(2+) serves as cofactor.

Its subcellular location is the cytoplasm. The catalysed reaction is L-histidyl-[protein] + phosphoenolpyruvate = N(pros)-phospho-L-histidyl-[protein] + pyruvate. In terms of biological role, general (non sugar-specific) component of the phosphoenolpyruvate-dependent sugar phosphotransferase system (sugar PTS). This major carbohydrate active-transport system catalyzes the phosphorylation of incoming sugar substrates concomitantly with their translocation across the cell membrane. Enzyme I transfers the phosphoryl group from phosphoenolpyruvate (PEP) to the phosphoryl carrier protein (HPr). The sequence is that of Phosphoenolpyruvate-protein phosphotransferase (ptsI) from Bacillus sp. (strain S).